The sequence spans 557 residues: DNA ligase (557 aa).

E249 serves as a coordination point for ATP. K251 acts as the N6-AMP-lysine intermediate in catalysis. ATP contacts are provided by R256, R271, E301, F340, R417, and K423.

Belongs to the ATP-dependent DNA ligase family. It depends on Mg(2+) as a cofactor.

The enzyme catalyses ATP + (deoxyribonucleotide)n-3'-hydroxyl + 5'-phospho-(deoxyribonucleotide)m = (deoxyribonucleotide)n+m + AMP + diphosphate.. Functionally, DNA ligase that seals nicks in double-stranded DNA during DNA replication, DNA recombination and DNA repair. This Methanothermobacter thermautotrophicus (Methanobacterium thermoformicicum) protein is DNA ligase.